Consider the following 635-residue polypeptide: Chaperone protein DnaK (635 aa).

A Phosphothreonine; by autocatalysis modification is found at T200. The segment at 595 to 635 (KAQPLTEKVQAKSSAENTSKEKSKADDDVVDADFEEVKDDK) is disordered. Residues 612-621 (TSKEKSKADD) are compositionally biased toward basic and acidic residues. Acidic residues predominate over residues 622–635 (DVVDADFEEVKDDK).

Belongs to the heat shock protein 70 family.

In terms of biological role, acts as a chaperone. The chain is Chaperone protein DnaK from Ruthia magnifica subsp. Calyptogena magnifica.